Here is a 74-residue protein sequence, read N- to C-terminus: Exodeoxyribonuclease 7 small subunit (74 aa).

The protein belongs to the XseB family. In terms of assembly, heterooligomer composed of large and small subunits.

It localises to the cytoplasm. It catalyses the reaction Exonucleolytic cleavage in either 5'- to 3'- or 3'- to 5'-direction to yield nucleoside 5'-phosphates.. Bidirectionally degrades single-stranded DNA into large acid-insoluble oligonucleotides, which are then degraded further into small acid-soluble oligonucleotides. The polypeptide is Exodeoxyribonuclease 7 small subunit (Actinobacillus pleuropneumoniae serotype 5b (strain L20)).